The following is a 208-amino-acid chain: Ribosomal RNA large subunit methyltransferase E (208 aa).

S-adenosyl-L-methionine is bound by residues Gly63, Trp65, Asp83, Asp99, and Asp124. Lys164 acts as the Proton acceptor in catalysis.

This sequence belongs to the class I-like SAM-binding methyltransferase superfamily. RNA methyltransferase RlmE family.

The protein localises to the cytoplasm. The catalysed reaction is uridine(2552) in 23S rRNA + S-adenosyl-L-methionine = 2'-O-methyluridine(2552) in 23S rRNA + S-adenosyl-L-homocysteine + H(+). Functionally, specifically methylates the uridine in position 2552 of 23S rRNA at the 2'-O position of the ribose in the fully assembled 50S ribosomal subunit. The polypeptide is Ribosomal RNA large subunit methyltransferase E (Salmonella typhi).